The sequence spans 61 residues: Chi-conotoxin MrIA (61 aa).

The first 19 residues, 1–19 (MRCLPVLIILLLLTASAPG), serve as a signal peptide directing secretion. The propeptide occupies 20–48 (VVVLPKTEDDVPMSSVYGNGKSILRGILR). 2 disulfides stabilise this stretch: C52/C61 and C53/C58. The residue at position 60 (P60) is a 4-hydroxyproline.

This sequence belongs to the conotoxin T superfamily. In terms of tissue distribution, expressed by the venom duct.

The protein localises to the secreted. In terms of biological role, chi-conotoxins inhibit the neuronal noradrenaline transporter (NET/SLC6A2). Activity has been described on both human (inhibition of norepinephrine uptake is IC(50)=1.26 uM) and rat (pIC(50)=6.21 corresponding IC(50)=0.16 uM) transporters. Acts as a reversible non-competitive inhibitor. The sequence is that of Chi-conotoxin MrIA from Conus marmoreus (Marble cone).